A 391-amino-acid chain; its full sequence is Terminal nucleotidyltransferase 5C (391 aa).

Belongs to the TENT family. In terms of assembly, interacts with BCCIP and PABPC1; the interaction has no effect on TENT5C poly(A) polymerase function. Interacts with PLK4; this interaction leads to the TENT5C recruitment into the centrosome.

Its subcellular location is the nucleus. It localises to the cytoplasm. It is found in the cytoskeleton. The protein resides in the microtubule organizing center. The protein localises to the centrosome. The catalysed reaction is RNA(n) + ATP = RNA(n)-3'-adenine ribonucleotide + diphosphate. Functionally, catalyzes the transfer of one adenosine molecule from an ATP to an mRNA poly(A) tail bearing a 3'-OH terminal group and enhances mRNA stability and gene expression. Can also elongate RNA oligos ending with uridine molecule, provided that the sequence is adenosine-rich. Mainly targets mRNAs encoding endoplasmic reticulum-targeted protein. In terms of biological role, (Microbial infection) Seems to enhance replication of some viruses, including yellow fever virus, in response to type I interferon. This chain is Terminal nucleotidyltransferase 5C, found in Homo sapiens (Human).